A 479-amino-acid chain; its full sequence is MSPQTETKASVGFKAGVKEYKLTYYTPEYETKDTDILAAFRVTPQPGVPPEEAGAAVAAESSTGTWTTVWTDGLTSLDRYKGRCYHIEPVPGEETQFIAYVAYPLDLFEEGSVTNMFTSIVGNVFGFKALAALRLEDLRIPPAYTKTFQGPPHGIQVERDKLNKYGRPLLGCTIKPKLGLSAKNYGRAVYECLRGGLDFTKDDENVNSQPFMRWRDRFLFCAEAIYKSQAETGEIKGHYLNATAGTCEEMIKRAVFARELGVRIVMHDYLTGGFTANTSLAHYCRDNGLLLHIHRAMHAVIDRQKNHGMHFRVLAKALRLSGGDHIHAGTVVGKLEGDRESTLGFVDLLRDDYVEKDRSRGIFFTQDWVSLPGVLPVASGGIHVWHMPALTEIFGDDSVLQFGGGTLGHPWGNAPGAVANRVALEACVQARNEGRDLAIEGNEIIREACKWSPELAAACEVWKEIRFNFPTIDKLDGQA.

Positions 1–2 (MS) are excised as a propeptide. N123 and T173 together coordinate substrate. The Proton acceptor role is filled by K175. Substrate is bound at residue K177. Mg(2+) contacts are provided by K201, D203, and E204. K201 is modified (N6-carboxylysine). Residue S208 is modified to Phosphoserine. H294 (proton acceptor) is an active-site residue. Substrate-binding residues include R295 and H327. A Phosphothreonine modification is found at T330. S379 serves as a coordination point for substrate.

It belongs to the RuBisCO large chain family. Type I subfamily. As to quaternary structure, heterohexadecamer of 8 large chains and 8 small chains; disulfide-linked. The disulfide link is formed within the large subunit homodimers. Mg(2+) serves as cofactor. Post-translationally, the disulfide bond which can form in the large chain dimeric partners within the hexadecamer appears to be associated with oxidative stress and protein turnover.

The protein resides in the plastid. It is found in the chloroplast. The catalysed reaction is 2 (2R)-3-phosphoglycerate + 2 H(+) = D-ribulose 1,5-bisphosphate + CO2 + H2O. It carries out the reaction D-ribulose 1,5-bisphosphate + O2 = 2-phosphoglycolate + (2R)-3-phosphoglycerate + 2 H(+). RuBisCO catalyzes two reactions: the carboxylation of D-ribulose 1,5-bisphosphate, the primary event in carbon dioxide fixation, as well as the oxidative fragmentation of the pentose substrate in the photorespiration process. Both reactions occur simultaneously and in competition at the same active site. This is Ribulose bisphosphate carboxylase large chain from Barbarea verna (Land cress).